The sequence spans 118 residues: Large ribosomal subunit protein bL20 (118 aa).

This sequence belongs to the bacterial ribosomal protein bL20 family.

Its function is as follows. Binds directly to 23S ribosomal RNA and is necessary for the in vitro assembly process of the 50S ribosomal subunit. It is not involved in the protein synthesizing functions of that subunit. The protein is Large ribosomal subunit protein bL20 of Bacillus anthracis (strain CDC 684 / NRRL 3495).